The primary structure comprises 121 residues: Large ribosomal subunit protein bL12 (121 aa).

It belongs to the bacterial ribosomal protein bL12 family. As to quaternary structure, homodimer. Part of the ribosomal stalk of the 50S ribosomal subunit. Forms a multimeric L10(L12)X complex, where L10 forms an elongated spine to which 2 to 4 L12 dimers bind in a sequential fashion. Binds GTP-bound translation factors.

Forms part of the ribosomal stalk which helps the ribosome interact with GTP-bound translation factors. Is thus essential for accurate translation. The chain is Large ribosomal subunit protein bL12 from Malacoplasma penetrans (strain HF-2) (Mycoplasma penetrans).